Reading from the N-terminus, the 195-residue chain is UPF0316 protein Pcar_2434 (195 aa).

The next 3 helical transmembrane spans lie at Leu13 to Leu33, Trp45 to Met65, and Val71 to Ile91.

The protein belongs to the UPF0316 family.

The protein localises to the cell membrane. The protein is UPF0316 protein Pcar_2434 of Syntrophotalea carbinolica (strain DSM 2380 / NBRC 103641 / GraBd1) (Pelobacter carbinolicus).